Reading from the N-terminus, the 599-residue chain is BICD family-like cargo adapter 1 (599 aa).

A disordered region spans residues 1-27 (MELPISFLSDSSRPAASSERGDQAALG). The CC1 box signature appears at 76–80 (AARLG). Residues 80–341 (GKALLERNQD…WEAHCQVRSL (262 aa)) are a coiled coil. The interval 352–375 (DSAVSTDSSMDESSETSSAKDVPA) is disordered. The stretch at 405-536 (EDDGLEEQIK…LEAWQDDMHR (132 aa)) forms a coiled coil.

It belongs to the BICDR family. Part of a tripartite complex with dynein and dynactin, acts an adapter linking the dynein motor complex and dynactin. Interacts with KIF1C. Interacts with RAB6A and RAB6B; interaction is specific to Rab6.

Its subcellular location is the cytoplasm. It is found in the cytoskeleton. It localises to the microtubule organizing center. The protein localises to the centrosome. Functionally, acts as an adapter protein linking the dynein motor complex to various cargos and converts dynein from a non-processive to a highly processive motor in the presence of dynactin. Facilitates the interaction between dynein and dynactin and activates dynein processivity (the ability to move along a microtubule for a long distance without falling off the track). Predominantly recruits 2 dyneins, which increases both the force and speed of the microtubule motor. Component of secretory vesicle machinery in developing neurons that acts as a regulator of neurite outgrowth. Regulates the secretory vesicle transport by controlling the accumulation of Rab6-containing secretory vesicles in the pericentrosomal region restricting anterograde secretory transport during the early phase of neuronal differentiation, thereby inhibiting neuritogenesis. The sequence is that of BICD family-like cargo adapter 1 (bicdl1) from Xenopus tropicalis (Western clawed frog).